A 92-amino-acid chain; its full sequence is Small ribosomal subunit protein uS19 (92 aa).

This sequence belongs to the universal ribosomal protein uS19 family.

Protein S19 forms a complex with S13 that binds strongly to the 16S ribosomal RNA. The polypeptide is Small ribosomal subunit protein uS19 (Rippkaea orientalis (strain PCC 8801 / RF-1) (Cyanothece sp. (strain PCC 8801))).